Here is a 248-residue protein sequence, read N- to C-terminus: Myelin protein P0 (248 aa).

Positions 1–29 are cleaved as a signal peptide; the sequence is MAPGAPSSSPSPILAALLFSSLVLSPALA. The Ig-like V-type domain maps to 30–143; it reads IVVYTDREIY…DIVGKTSQVT (114 aa). Residues 30 to 153 are Extracellular-facing; it reads IVVYTDREIY…LYVFEKVPTR (124 aa). An intrachain disulfide couples Cys50 to Cys127. An N-linked (GlcNAc...) (complex) asparagine glycan is attached at Asn122. Residues 154–179 form a helical membrane-spanning segment; the sequence is YGVVLGAVIGGILGVVLLLLLLFYLI. The Cytoplasmic segment spans residues 180–248; that stretch reads RYCWLRRQAA…GLGESRKDKK (69 aa). Ser210 is subject to Phosphoserine; by PKC. The segment at 222-248 is disordered; it reads MLDHSRSTKAASEKKSKGLGESRKDKK. The segment covering 224 to 248 has biased composition (basic and acidic residues); the sequence is DHSRSTKAASEKKSKGLGESRKDKK. A phosphoserine mark is found at Ser226 and Ser228. Ser233 carries the phosphoserine; by PKC modification. Residues Ser237 and Ser243 each carry the phosphoserine modification.

This sequence belongs to the myelin P0 protein family. In terms of assembly, homodimer and homotetramer. In terms of processing, N-glycosylated; contains sulfate-substituted glycan. As to expression, found only in peripheral nervous system Schwann cells.

Its subcellular location is the cell membrane. Its function is as follows. Is an adhesion molecule necessary for normal myelination in the peripheral nervous system. It mediates adhesion between adjacent myelin wraps and ultimately drives myelin compaction. This chain is Myelin protein P0 (Mpz), found in Mus musculus (Mouse).